Reading from the N-terminus, the 125-residue chain is Small ribosomal subunit protein uS12 (125 aa).

A 3-methylthioaspartic acid modification is found at aspartate 89. Residues glycine 106–alanine 125 form a disordered region. Basic residues predominate over residues serine 113–alanine 125.

This sequence belongs to the universal ribosomal protein uS12 family. Part of the 30S ribosomal subunit. Contacts proteins S8 and S17. May interact with IF1 in the 30S initiation complex.

In terms of biological role, with S4 and S5 plays an important role in translational accuracy. Functionally, interacts with and stabilizes bases of the 16S rRNA that are involved in tRNA selection in the A site and with the mRNA backbone. Located at the interface of the 30S and 50S subunits, it traverses the body of the 30S subunit contacting proteins on the other side and probably holding the rRNA structure together. The combined cluster of proteins S8, S12 and S17 appears to hold together the shoulder and platform of the 30S subunit. The sequence is that of Small ribosomal subunit protein uS12 from Variovorax paradoxus (strain S110).